A 247-amino-acid chain; its full sequence is Uridylate kinase (247 aa).

Residue Lys15–Gly18 coordinates ATP. The tract at residues Gly23–Gly28 is involved in allosteric activation by GTP. Gly57 is a UMP binding site. ATP contacts are provided by Gly58 and Arg62. Residues Asp77 and Thr138–Thr145 each bind UMP. ATP is bound by residues Thr165, Tyr171, and Asp174.

It belongs to the UMP kinase family. In terms of assembly, homohexamer.

It localises to the cytoplasm. The enzyme catalyses UMP + ATP = UDP + ADP. Its pathway is pyrimidine metabolism; CTP biosynthesis via de novo pathway; UDP from UMP (UMPK route): step 1/1. With respect to regulation, allosterically activated by GTP. Inhibited by UTP. Catalyzes the reversible phosphorylation of UMP to UDP. The polypeptide is Uridylate kinase (Shewanella loihica (strain ATCC BAA-1088 / PV-4)).